A 429-amino-acid chain; its full sequence is Enolase (429 aa).

Residue Gln162 coordinates (2R)-2-phosphoglycerate. Glu204 acts as the Proton donor in catalysis. Residues Asp241, Glu282, and Asp309 each contribute to the Mg(2+) site. (2R)-2-phosphoglycerate-binding residues include Lys334, Arg363, Ser364, and Lys385. The active-site Proton acceptor is the Lys334.

Belongs to the enolase family. Mg(2+) is required as a cofactor.

It is found in the cytoplasm. It localises to the secreted. Its subcellular location is the cell surface. The catalysed reaction is (2R)-2-phosphoglycerate = phosphoenolpyruvate + H2O. The protein operates within carbohydrate degradation; glycolysis; pyruvate from D-glyceraldehyde 3-phosphate: step 4/5. In terms of biological role, catalyzes the reversible conversion of 2-phosphoglycerate (2-PG) into phosphoenolpyruvate (PEP). It is essential for the degradation of carbohydrates via glycolysis. This chain is Enolase, found in Acidothermus cellulolyticus (strain ATCC 43068 / DSM 8971 / 11B).